Here is a 248-residue protein sequence, read N- to C-terminus: tRNA pseudouridine synthase A (248 aa).

The active-site Nucleophile is the Asp-53. Tyr-111 lines the substrate pocket.

This sequence belongs to the tRNA pseudouridine synthase TruA family. In terms of assembly, homodimer.

It catalyses the reaction uridine(38/39/40) in tRNA = pseudouridine(38/39/40) in tRNA. In terms of biological role, formation of pseudouridine at positions 38, 39 and 40 in the anticodon stem and loop of transfer RNAs. This is tRNA pseudouridine synthase A from Listeria monocytogenes serovar 1/2a (strain ATCC BAA-679 / EGD-e).